We begin with the raw amino-acid sequence, 131 residues long: MKKTKVINSDISRVIAQMGHFDKLSIGDAGMPVPRTTEKIDLAVTNGVPSFMEVLNNVLEELAVQRIYLAEEIKTENPDMLAAIETRLPETPISFIPHTEMKQELNNCHAFIRTGEMTPYANILLESNVVF.

His-20 acts as the Proton donor in catalysis. Substrate-binding positions include Asp-28, His-98, and 120–122; that span reads YAN.

It belongs to the RbsD / FucU family. RbsD subfamily. In terms of assembly, homodecamer.

Its subcellular location is the cytoplasm. The catalysed reaction is beta-D-ribopyranose = beta-D-ribofuranose. The protein operates within carbohydrate metabolism; D-ribose degradation; D-ribose 5-phosphate from beta-D-ribopyranose: step 1/2. Catalyzes the interconversion of beta-pyran and beta-furan forms of D-ribose. The polypeptide is D-ribose pyranase (Enterococcus faecalis (strain ATCC 700802 / V583)).